The primary structure comprises 265 residues: 5'-nucleotidase SurE (265 aa).

The a divalent metal cation site is built by D8, D9, S39, and N96.

The protein belongs to the SurE nucleotidase family. Requires a divalent metal cation as cofactor.

The protein resides in the cytoplasm. It catalyses the reaction a ribonucleoside 5'-phosphate + H2O = a ribonucleoside + phosphate. In terms of biological role, nucleotidase that shows phosphatase activity on nucleoside 5'-monophosphates. This is 5'-nucleotidase SurE from Dehalococcoides mccartyi (strain ATCC BAA-2100 / JCM 16839 / KCTC 5957 / BAV1).